The chain runs to 1142 residues: Nucleoporin nup131 (1142 aa).

It belongs to the nucleoporin Nup133 family. In terms of assembly, component of the npc107-120 complex which consists of nup85, nup107, nup120, nup131, nup132 and seh1. Interacts with nup107.

It localises to the nucleus. Functions as a component of the nuclear pore complex (NPC). NPC components, collectively referred to as nucleoporins (NUPs), can play the role of both NPC structural components and of docking or interaction partners for transiently associated nuclear transport factors. Active directional transport is assured by both, a Phe-Gly (FG) repeat affinity gradient for these transport factors across the NPC and a transport cofactor concentration gradient across the nuclear envelope. This Schizosaccharomyces pombe (strain 972 / ATCC 24843) (Fission yeast) protein is Nucleoporin nup131 (nup131).